The chain runs to 703 residues: Bifunctional arginine dihydrolase/ornithine cyclodeaminase AgrE (703 aa).

The arginine dihydrolase stretch occupies residues 10–269 (CPPDHYDVDY…GAAKCLTLRV (260 aa)). L-arginine is bound by residues N22, D65, N71, R90, and R139. N22 contacts L-ornithine. R90, R139, and H168 together coordinate L-ornithine. The active-site Proton donor/acceptor is the H168. Residues D170 and A258 each coordinate L-arginine. L-ornithine is bound at residue C264. The active-site Nucleophile is C264. An ornithine cyclodeaminase region spans residues 285–694 (SRIIRIEGHL…SLLTQQLDKL (410 aa)). N524, A525, D603, S635, M636, L637, H638, D656, D679, and V680 together coordinate NAD(+).

The protein in the N-terminal section; belongs to the DDAH family. In the C-terminal section; belongs to the AgrE/ArgZ ornithine cyclodeaminase family. Homotetramer. NAD(+) serves as cofactor.

It carries out the reaction L-arginine + 2 H2O + 2 H(+) = L-ornithine + 2 NH4(+) + CO2. The catalysed reaction is L-ornithine = L-proline + NH4(+). With respect to regulation, ornithine cyclodeaminase activity is inhibited by ATP. Its function is as follows. Bifunctional enzyme involved in a cyanobacterial arginine utilization pathway that produces glutamate and enables cellular adaptation to nitrogen fluctuations. Catalyzes the hydrolysis of arginine to ornithine, with the release of ammonia and carbon dioxide. Then, catalyzes the conversion of ornithine to proline, with the release of ammonia. This chain is Bifunctional arginine dihydrolase/ornithine cyclodeaminase AgrE, found in Nostoc sp. (strain PCC 7120 / SAG 25.82 / UTEX 2576).